We begin with the raw amino-acid sequence, 374 residues long: MAITVYLSCLLVLSMAGLAQGIKSSLRSQDPGPQPLELKQAFTLFQIQYNRSYSNPEEYARRLDIFAHNLAQAQQLEEEDLGTAEFGVTPFSDLTEEEFGRLYGHRRMDGEAPKVGREVGSEEWGESVPPTCDWRKLDGVISSVKKQESCSCCWAMAAAGNIEALWAIKYRQSVELSVQELLDCGRCGDGCRGGFVWDAFITVLNNSGLASEKDYPFQGQVKPHRCLAKKRTKVAWIQDFIMLPDNEQKIAWYLATQGPITVTINMKLLKLYKKGVIEATPTSCDPFLVDHSVLLVGFGKSESVADRRAGAAGAQPQSRRSIPFWILKNSWGTKWGXGGYFRLYRGNNTCGITKYPLTARVDQPAKKRPVSCPP.

The signal sequence occupies residues 1 to 21 (MAITVYLSCLLVLSMAGLAQG). A propeptide spanning residues 22–127 (IKSSLRSQDP…EVGSEEWGES (106 aa)) is cleaved from the precursor. Disulfide bonds link C150-C191 and C184-C226. The active site involves C153. N-linked (GlcNAc...) asparagine glycosylation occurs at N205. Active-site residues include H291 and N329. An N-linked (GlcNAc...) asparagine glycan is attached at N347.

This sequence belongs to the peptidase C1 family.

Its subcellular location is the endoplasmic reticulum. In terms of biological role, may have a specific function in the mechanism or regulation of T-cell cytolytic activity. The sequence is that of Cathepsin W (CTSW) from Felis catus (Cat).